A 1499-amino-acid polypeptide reads, in one-letter code: Rho GTPase-activating protein 35 (1499 aa).

A has GTPase activity, required for proper localization region spans residues 1 to 266 (MMMARKQDVR…IPYFEALKQQ (266 aa)). GTP-binding positions include Lys-28, 33 to 37 (IGKSC), Leu-52, Ser-56, 95 to 97 (EQT), 201 to 203 (KCD), and 229 to 231 (SAR). 4 consecutive FF domains span residues 270–327 (IATA…HIHR), 368–422 (KLLE…HLEK), 429–483 (RAEM…HQKQ), and 485–550 (IDRA…HIHF). Tyr-308 bears the Phosphotyrosine mark. The residue at position 589 (Ser-589) is a Phosphoserine. A pG1 pseudoGTPase domain is found at 592 to 767 (DLNIDRINLV…LLDSKRNLNL (176 aa)). Residues Ser-770 and Ser-773 each carry the phosphoserine modification. The pG2 pseudoGTPase domain maps to 783–947 (RIVMCLMCGD…FKDVVEKKNI (165 aa)). 4 positions are modified to phosphoserine: Ser-970, Ser-975, Ser-985, and Ser-1072. Phosphotyrosine is present on Tyr-1087. Tyr-1105 is subject to Phosphotyrosine; by ABL2 and PTK6. Over residues 1124–1141 (KAQSNGSGNGSDSEMDTS) the composition is skewed to polar residues. The tract at residues 1124–1148 (KAQSNGSGNGSDSEMDTSSLERGRK) is disordered. Ser-1134, Ser-1142, Ser-1150, Ser-1176, Ser-1179, and Ser-1221 each carry phosphoserine. The tract at residues 1177-1207 (VGSDDELGPIRKKEEDQASQGYKGDNAVIPY) is disordered. The required for phospholipid binding and regulation of the substrate preference stretch occupies residues 1213–1236 (PRRRNILRSLRRNTKKPKPKPRPS). The residue at position 1226 (Thr-1226) is a Phosphothreonine. At Ser-1236 the chain carries Phosphoserine. Residues 1249 to 1436 (VPLTTVVTPE…LFIQQCPFFF (188 aa)) enclose the Rho-GAP domain. The tract at residues 1446 to 1499 (GAAPGSPSAMAPTVPFLTSTPATSQPSPPQSPPPTPQSPMQPLLSSQLQAEHTL) is disordered. Low complexity predominate over residues 1448–1470 (APGSPSAMAPTVPFLTSTPATSQ). Positions 1471–1484 (PSPPQSPPPTPQSP) are enriched in pro residues. Phosphoserine is present on residues Ser-1472 and Ser-1476. Position 1480 is a phosphothreonine (Thr-1480). The residue at position 1483 (Ser-1483) is a Phosphoserine. Residues 1485–1499 (MQPLLSSQLQAEHTL) show a composition bias toward low complexity.

As to quaternary structure, interacts with the general transcription factor GTF2I, the interaction sequesters GTF2I in the cytoplasm. Interacts with RASA1. Post-translationally, phosphorylation of Tyr-1105 by PTK6 promotes the association with RASA1, inactivating RHOA while activating RAS. Phosphorylation at Tyr-308 by PDGFRA inhibits binding to GTF2I. Phosphorylated by PRKCA at Ser-1221 and Thr-1226, induces relocalization from the cytoplasm to regions of plasma membrane ruffling and prevents the binding and substrate specificity regulation by phospholipids. In brain, phosphorylated by FYN and SRC. During focal adhesion formation, phosphorylated by MAPK1 and MAPK3 at the C-terminal region, probably at Ser-1451, Ser-1476, Thr-1480 and Ser-1483. Phosphorylation by MAPK1 and MAPK3 inhibits GAP function and localizes ARGHAP35 away from newly forming focal adhesions and stress fibers in cells spreading on fibronectin. Phosphorylation at Ser-1476 and Thr-1480 by GSK3B requires priming by MAPK and inhibits RhoGAP activity and modulates polarized cell migration. Expressed in the developing kidneys. Expressed in all regions of the mature nervous system (at protein level). Detected in neutrophils (at protein level).

It localises to the cytoplasm. It is found in the cytoskeleton. The protein resides in the cilium basal body. Its subcellular location is the nucleus. The protein localises to the cell membrane. In terms of biological role, rho GTPase-activating protein (GAP). Binds several acidic phospholipids which inhibits the Rho GAP activity to promote the Rac GAP activity. This binding is inhibited by phosphorylation by PRKCA. Involved in cell differentiation as well as cell adhesion and migration, plays an important role in retinal tissue morphogenesis, neural tube fusion, midline fusion of the cerebral hemispheres and mammary gland branching morphogenesis. Transduces signals from p21-ras to the nucleus, acting via the ras GTPase-activating protein (GAP). Transduces SRC-dependent signals from cell-surface adhesion molecules, such as laminin, to promote neurite outgrowth. Regulates axon outgrowth, guidance and fasciculation. Modulates Rho GTPase-dependent F-actin polymerization, organization and assembly, is involved in polarized cell migration and in the positive regulation of ciliogenesis and cilia elongation. During mammary gland development, is required in both the epithelial and stromal compartments for ductal outgrowth. Represses transcription of the glucocorticoid receptor by binding to the cis-acting regulatory sequence 5'-GAGAAAAGAAACTGGAGAAACTC-3'; this function is however unclear and would need additional experimental evidences. The protein is Rho GTPase-activating protein 35 of Mus musculus (Mouse).